The primary structure comprises 208 residues: Calcyphosin-like protein (208 aa).

4 EF-hand domains span residues 39-74 (AGIKGLGRVFRIMDDDNNRTLDFKEFMKGLNDYAVV), 75-110 (MEKEEVEELFRRFDKDGNGTIDFNEFLLTLRPPMSR), 111-146 (ARKEVIMQAFRKLDKTGDGVITIEDLREVYNAKHHP), and 154-191 (SEEQVFRKFLDNFDSPYDKDGLVTPEEFMNYYAGVSAS). Ca(2+)-binding residues include Asp52, Asp54, Asn56, Thr58, Glu63, Asp88, Asp90, Asn92, Thr94, and Glu99.

It localises to the cytoplasm. In Homo sapiens (Human), this protein is Calcyphosin-like protein (CAPSL).